The sequence spans 1653 residues: Clathrin heavy chain (1653 aa).

The interval 1-483 is globular terminal domain; sequence MSDLPIEFTE…FDTTLALACY (483 aa). WD40-like repeat regions lie at residues 23-66, 67-107, 108-152, 153-198, 199-263, 264-307, and 308-336; these read FLDF…KNMG, GDSA…LDEP, VIFW…ANLN, NTQI…QAID, GHVA…PDAT, NDFP…ITAE, and SVFT…VEIS. Positions 453 to 469 are binding site for the uncoating ATPase, involved in lattice disassembly; sequence EKWLKEDKLECSEELGD. The tract at residues 484 to 527 is flexible linker; sequence LRAGAHAKVISCLAELQQFEKIIPYCQKVGYQPNFLVLISSLIR. Residues 528–1653 form a heavy chain arm region; that stretch reads SSPDRASEFA…SAMNVQPTGF (1126 aa). 7 CHCR repeats span residues 543–689, 692–834, 839–978, 985–1130, 1134–1275, 1280–1426, and 1429–1572; these read NPET…QTVV, ATKF…DEAF, LQSV…QLID, IPEL…IPDA, YIKA…FKLA, LNLI…SLLV, and LTSL…REGF. A Glycyl lysine isopeptide (Lys-Gly) (interchain with G-Cter in ubiquitin) cross-link involves residue lysine 1107. The involved in binding clathrin light chain stretch occupies residues 1219 to 1528; sequence AARLCYSAVS…LLYRRNKKWA (310 aa).

The protein belongs to the clathrin heavy chain family. In terms of assembly, clathrin triskelions, composed of 3 heavy chains and 3 light chains, are the basic subunits of the clathrin coat. Interacts with the auxilin-like clathrin uncoating factor SWA2. Interacts with INP53.

The protein resides in the cytoplasmic vesicle membrane. The protein localises to the membrane. Its subcellular location is the coated pit. In terms of biological role, clathrin is the major protein of the polyhedral coat of coated pits and vesicles. In yeast, it is involved in the retention of proteins in an intracellular membrane compartment, presumably the trans-Golgi. This chain is Clathrin heavy chain (CHC1), found in Saccharomyces cerevisiae (strain ATCC 204508 / S288c) (Baker's yeast).